Consider the following 123-residue polypeptide: Small ribosomal subunit protein uS12 (123 aa).

Residue Asp89 is modified to 3-methylthioaspartic acid.

Belongs to the universal ribosomal protein uS12 family. In terms of assembly, part of the 30S ribosomal subunit. Contacts proteins S8 and S17. May interact with IF1 in the 30S initiation complex.

In terms of biological role, with S4 and S5 plays an important role in translational accuracy. Interacts with and stabilizes bases of the 16S rRNA that are involved in tRNA selection in the A site and with the mRNA backbone. Located at the interface of the 30S and 50S subunits, it traverses the body of the 30S subunit contacting proteins on the other side and probably holding the rRNA structure together. The combined cluster of proteins S8, S12 and S17 appears to hold together the shoulder and platform of the 30S subunit. In Rhizobium meliloti (strain 1021) (Ensifer meliloti), this protein is Small ribosomal subunit protein uS12.